The primary structure comprises 373 residues: Leucoanthocyanidin dioxygenase 2 (373 aa).

The Fe2OG dioxygenase domain maps to 216-315 (LLLQLKINYY…RVSWVVFCEP (100 aa)). The Fe cation site is built by His-240, Asp-242, and His-296. Residue Arg-306 coordinates 2-oxoglutarate.

The protein belongs to the iron/ascorbate-dependent oxidoreductase family. The cofactor is L-ascorbate. Fe(2+) is required as a cofactor.

It carries out the reaction a (2R,3S,4S)-leucoanthocyanidin + 2-oxoglutarate + O2 = a 4-H-anthocyanidin with a 3-hydroxy group + succinate + CO2 + 2 H2O. It participates in pigment biosynthesis; anthocyanin biosynthesis. Its function is as follows. Involved in anthocyanin and protoanthocyanidin biosynthesis by catalyzing the oxidation of leucoanthocyanidins into anthocyanidins. This Oryza sativa subsp. japonica (Rice) protein is Leucoanthocyanidin dioxygenase 2.